The chain runs to 517 residues: Facilitated trehalose transporter Tret1 (517 aa).

At 1 to 56 (MWIEIPECYEVLRNVFSKFRRHSLTAAMVKLLMRADTHVSFTVPAEEPVAKCTFSQ) the chain is on the cytoplasmic side. Residues 57-77 (VLAALSVSLGSMVVGFSSAYT) form a helical membrane-spanning segment. The Extracellular portion of the chain corresponds to 78 to 100 (SPALVSMKDRNITSFEVTDQSGS). Residue Asn88 is glycosylated (N-linked (GlcNAc...) asparagine). The chain crosses the membrane as a helical span at residues 101 to 121 (WVGGIMPLAGLVGGILGGPLI). The Cytoplasmic segment spans residues 122–135 (EYLGRKNTILATAT). A helical transmembrane segment spans residues 136 to 156 (PFIISWLLIACATHVAMVLVG). At 157-158 (RA) the chain is on the extracellular side. A helical transmembrane segment spans residues 159–179 (LSGFSVGVASLSLPVYLGETV). Topologically, residues 180-184 (QPEVR) are cytoplasmic. Residues 185–205 (GTLGLLPTAFGNIGILLCFVA) traverse the membrane as a helical segment. The Extracellular portion of the chain corresponds to 206–212 (GNYMDWS). Residues 213 to 233 (ELAFLGATLPVPFLILMFLIP) form a helical membrane-spanning segment. Residues 234–296 (ETPRWYVSRG…DLLKKTNLKP (63 aa)) lie on the Cytoplasmic side of the membrane. The chain crosses the membrane as a helical span at residues 297–317 (LLISLGLMFFQQLSGINAVIF). The Extracellular portion of the chain corresponds to 318 to 333 (YTVQIFQDAGSTIDEN). A helical membrane pass occupies residues 334–354 (LCTIIVGVVNFIATFIATLLI). The Cytoplasmic segment spans residues 355–360 (DRLGRK). A helical transmembrane segment spans residues 361–381 (MLLYISDIAMIITLMTLGGFF). Over 382 to 392 (YVKNNGGDVSH) the chain is Extracellular. A helical membrane pass occupies residues 393–413 (IGWLPLASFVIFVLGFSLGFG). Residues 414–437 (PIPWLMMGEILPGKIRGSAASVAT) lie on the Cytoplasmic side of the membrane. The chain crosses the membrane as a helical span at residues 438–458 (AFNWSCTFVVTKTFADIIASI). The Extracellular portion of the chain corresponds to 459–461 (GTH). Residues 462–482 (GAFWMFGSVCVVGLVFVIMYV) traverse the membrane as a helical segment. Over 483-517 (PETQGKSLEDIERKMCGRVRRMSSVANIKPLSFNM) the chain is Cytoplasmic.

This sequence belongs to the major facilitator superfamily. Sugar transporter (TC 2.A.1.1) family. Trehalose transporter subfamily.

It localises to the cell membrane. High-capacity facilitative transporter for trehalose. Does not transport maltose, sucrose or lactose. Mediates the bidirectional transfer of trehalose. Responsible for the transport of trehalose synthesized in the fat body and the incorporation of trehalose into other tissues that require a carbon source, thereby regulating trehalose levels in the hemolymph. This Culex quinquefasciatus (Southern house mosquito) protein is Facilitated trehalose transporter Tret1.